The chain runs to 166 residues: MTIVYLSLGTNMGDRAAYLQKALEALADLPQTRLLAQSSIYETTAWGKTGQADFLNMACQLDTQLTAADFLKETQAIEQSLGRVRHEKWGSRTIDIDILLFGEEVYDTKELKVPHPYMTERAFVLIPLLELQSDLKLPPNHKFLRDYLAALDQSDITLFSAQQTEF.

The protein belongs to the HPPK family.

It carries out the reaction 6-hydroxymethyl-7,8-dihydropterin + ATP = (7,8-dihydropterin-6-yl)methyl diphosphate + AMP + H(+). Its pathway is cofactor biosynthesis; tetrahydrofolate biosynthesis; 2-amino-4-hydroxy-6-hydroxymethyl-7,8-dihydropteridine diphosphate from 7,8-dihydroneopterin triphosphate: step 4/4. Catalyzes the transfer of pyrophosphate from adenosine triphosphate (ATP) to 6-hydroxymethyl-7,8-dihydropterin, an enzymatic step in folate biosynthesis pathway. The polypeptide is 2-amino-4-hydroxy-6-hydroxymethyldihydropteridine pyrophosphokinase (folK) (Streptococcus pyogenes serotype M6 (strain ATCC BAA-946 / MGAS10394)).